A 330-amino-acid chain; its full sequence is ADP-L-glycero-D-manno-heptose-6-epimerase (330 aa).

Residues 11–12 (FI), 32–33 (DN), Lys39, Lys54, 75–79 (EGACS), and Asn92 contribute to the NADP(+) site. Tyr139 (proton acceptor) is an active-site residue. Lys143 serves as a coordination point for NADP(+). Asn168 contacts substrate. NADP(+) contacts are provided by Val169 and Lys177. Lys177 acts as the Proton acceptor in catalysis. Residues Arg179, His186, 200–203 (FGEY), Arg213, and Tyr292 each bind substrate.

It belongs to the NAD(P)-dependent epimerase/dehydratase family. HldD subfamily. Homopentamer. NADP(+) is required as a cofactor.

The enzyme catalyses ADP-D-glycero-beta-D-manno-heptose = ADP-L-glycero-beta-D-manno-heptose. It participates in nucleotide-sugar biosynthesis; ADP-L-glycero-beta-D-manno-heptose biosynthesis; ADP-L-glycero-beta-D-manno-heptose from D-glycero-beta-D-manno-heptose 7-phosphate: step 4/4. Catalyzes the interconversion between ADP-D-glycero-beta-D-manno-heptose and ADP-L-glycero-beta-D-manno-heptose via an epimerization at carbon 6 of the heptose. This Burkholderia thailandensis (strain ATCC 700388 / DSM 13276 / CCUG 48851 / CIP 106301 / E264) protein is ADP-L-glycero-D-manno-heptose-6-epimerase.